A 250-amino-acid chain; its full sequence is Aquaporin (250 aa).

At 1–15 the chain is on the cytoplasmic side; it reads MTRETLKTLQSTFGE. A helical transmembrane segment spans residues 16–36; the sequence is MVASFVFGFAVYSALLGSALT. At 37–42 the chain is on the extracellular side; that stretch reads EQSAAR. The helical transmembrane segment at 43–63 threads the bilayer; sequence VIVGLTVGFSGICVIYSFCDV. Residues 64–86 are Cytoplasmic-facing; that stretch reads TVAHFNPAITLAAILTCKLGVLR. The short motif at 69 to 71 is the NPA element; the sequence is NPA. The chain crosses the membrane as a helical span at residues 87–107; the sequence is GIGYIVAQYIGFILAVCALLP. At 108–133 the chain is on the extracellular side; it reads CSPVGYKETLNIIRPTPSPFGGDNLN. The chain crosses the membrane as a helical span at residues 134–154; sequence VFFTEFFLTAILVHVAFATAV. Topologically, residues 155-179 are cytoplasmic; that stretch reads NPYKPKTDTEGKFVDPDEEEPVDRR. A helical transmembrane segment spans residues 180–200; that stretch reads ITAPLCIGLTLGFLAFLGLAS. Topologically, residues 201 to 224 are extracellular; it reads SGGAFNPGLTLAPVIMSNTWNHFW. The short motif at 206–208 is the NPG element; sequence NPG. A helical transmembrane segment spans residues 225 to 245; that stretch reads AYFAGQYLGGFVGGLLQVLVL. The Cytoplasmic portion of the chain corresponds to 246–250; the sequence is YKLSF.

Belongs to the MIP/aquaporin (TC 1.A.8) family.

Its subcellular location is the cell membrane. Functionally, water channel required to facilitate the transport of water across membranes. Involved in osmotolerance. The polypeptide is Aquaporin (AQP) (Encephalitozoon cuniculi (strain GB-M1) (Microsporidian parasite)).